The primary structure comprises 314 residues: Homoserine kinase (314 aa).

Proline 95–alanine 105 contacts ATP.

The protein belongs to the GHMP kinase family. Homoserine kinase subfamily.

The protein resides in the cytoplasm. The enzyme catalyses L-homoserine + ATP = O-phospho-L-homoserine + ADP + H(+). The protein operates within amino-acid biosynthesis; L-threonine biosynthesis; L-threonine from L-aspartate: step 4/5. Catalyzes the ATP-dependent phosphorylation of L-homoserine to L-homoserine phosphate. The protein is Homoserine kinase of Mycobacterium sp. (strain KMS).